The chain runs to 296 residues: F-box only protein 2 (296 aa).

Residues 1 to 41 (MDGDGDPESVGQPEEASPEEQPEEASAEEERPEDQQEEEAA) form a disordered region. The span at 16 to 40 (ASPEEQPEEASAEEERPEDQQEEEA) shows a compositional bias: acidic residues. The F-box domain maps to 44 to 91 (AAYLDELPEPLLLRVLAALPAAELVQACRLVCLRWKELVDGAPLWLLK). The FBA domain maps to 113–296 (FYFLSKRRRN…VTNSSVWVEP (184 aa)). Residues 210–212 (RSD) and 278–279 (YW) each bind a carbohydrate.

Component of the SCF(FBXO2) complex consisting of CUL1, RBX1, SKP1 and FBXO2. Predominantly detected as heterodimer with SKP1; the heterodimer with SKP1 is not part of the SCF(FBXO2) complex.

It localises to the cytoplasm. It is found in the microsome membrane. It participates in protein modification; protein ubiquitination. Functionally, substrate recognition component of a SCF (SKP1-CUL1-F-box protein) E3 ubiquitin-protein ligase complex that mediates the ubiquitination and subsequent proteasomal degradation of target proteins. Involved in the endoplasmic reticulum-associated degradation pathway (ERAD) for misfolded lumenal proteins by recognizing and binding sugar chains on unfolded glycoproteins that are retrotranslocated into the cytosol and promoting their ubiquitination and subsequent degradation. Prevents formation of cytosolic aggregates of unfolded glycoproteins that have been retrotranslocated into the cytosol. Able to recognize and bind denatured glycoproteins, preferentially those of the high-mannose type. The chain is F-box only protein 2 (FBXO2) from Homo sapiens (Human).